We begin with the raw amino-acid sequence, 259 residues long: Dihydroorotate dehydrogenase B (NAD(+)), electron transfer subunit (259 aa).

Residues Met-2 to Val-102 form the FAD-binding FR-type domain. Residues Arg-53 to Ser-56, Leu-70 to Arg-72, and Gly-77 to Thr-78 each bind FAD. Cys-221, Cys-226, Cys-229, and Cys-246 together coordinate [2Fe-2S] cluster.

Belongs to the PyrK family. Heterotetramer of 2 PyrK and 2 PyrD type B subunits. [2Fe-2S] cluster serves as cofactor. Requires FAD as cofactor.

It functions in the pathway pyrimidine metabolism; UMP biosynthesis via de novo pathway; orotate from (S)-dihydroorotate (NAD(+) route): step 1/1. In terms of biological role, responsible for channeling the electrons from the oxidation of dihydroorotate from the FMN redox center in the PyrD type B subunit to the ultimate electron acceptor NAD(+). The protein is Dihydroorotate dehydrogenase B (NAD(+)), electron transfer subunit of Bacillus cereus (strain ZK / E33L).